The primary structure comprises 426 residues: Glutamyl-tRNA reductase (426 aa).

Residues T49–R52, S109, E114–Q116, and Q120 contribute to the substrate site. C50 serves as the catalytic Nucleophile. Residue G189–G194 coordinates NADP(+).

It belongs to the glutamyl-tRNA reductase family. As to quaternary structure, homodimer.

The enzyme catalyses (S)-4-amino-5-oxopentanoate + tRNA(Glu) + NADP(+) = L-glutamyl-tRNA(Glu) + NADPH + H(+). The protein operates within porphyrin-containing compound metabolism; protoporphyrin-IX biosynthesis; 5-aminolevulinate from L-glutamyl-tRNA(Glu): step 1/2. Its pathway is porphyrin-containing compound metabolism; chlorophyll biosynthesis. Catalyzes the NADPH-dependent reduction of glutamyl-tRNA(Glu) to glutamate 1-semialdehyde (GSA). The protein is Glutamyl-tRNA reductase of Chlorobium phaeobacteroides (strain BS1).